Reading from the N-terminus, the 95-residue chain is Protein TusB (95 aa).

This sequence belongs to the DsrH/TusB family. In terms of assembly, heterohexamer, formed by a dimer of trimers. The hexameric TusBCD complex contains 2 copies each of TusB, TusC and TusD. The TusBCD complex interacts with TusE.

The protein resides in the cytoplasm. In terms of biological role, part of a sulfur-relay system required for 2-thiolation of 5-methylaminomethyl-2-thiouridine (mnm(5)s(2)U) at tRNA wobble positions. The chain is Protein TusB from Enterobacter sp. (strain 638).